Here is a 449-residue protein sequence, read N- to C-terminus: Na(+)-translocating NADH-quinone reductase subunit A (449 aa).

The protein belongs to the NqrA family. Composed of six subunits; NqrA, NqrB, NqrC, NqrD, NqrE and NqrF.

The enzyme catalyses a ubiquinone + n Na(+)(in) + NADH + H(+) = a ubiquinol + n Na(+)(out) + NAD(+). Functionally, NQR complex catalyzes the reduction of ubiquinone-1 to ubiquinol by two successive reactions, coupled with the transport of Na(+) ions from the cytoplasm to the periplasm. NqrA to NqrE are probably involved in the second step, the conversion of ubisemiquinone to ubiquinol. This chain is Na(+)-translocating NADH-quinone reductase subunit A, found in Serratia proteamaculans (strain 568).